Reading from the N-terminus, the 245-residue chain is 5-oxoprolinase subunit A (245 aa).

The protein belongs to the LamB/PxpA family. As to quaternary structure, forms a complex composed of PxpA, PxpB and PxpC.

It catalyses the reaction 5-oxo-L-proline + ATP + 2 H2O = L-glutamate + ADP + phosphate + H(+). Functionally, catalyzes the cleavage of 5-oxoproline to form L-glutamate coupled to the hydrolysis of ATP to ADP and inorganic phosphate. This is 5-oxoprolinase subunit A from Cronobacter sakazakii (strain ATCC BAA-894) (Enterobacter sakazakii).